The primary structure comprises 290 residues: Protein male abnormal 3 (290 aa).

2 consecutive DNA-binding regions (DM) follow at residues 28–74 (CQRC…SKKK) and 94–142 (CARC…KLRR). Disordered regions lie at residues 139–167 (KLRRSQQKSRDGKEPKRNSRRKSKDMDME) and 179–202 (IIGTSASPSPSSTTDTMSPSLSMS). Basic and acidic residues predominate over residues 146-155 (KSRDGKEPKR). Residues 182–202 (TSASPSPSSTTDTMSPSLSMS) are compositionally biased toward low complexity.

As to expression, expression is undetectable in hermaphrodites, but persists in males. In males, expressed in cells of the tail tip.

It is found in the nucleus. Its function is as follows. Transcription factor which binds the DNA motif 5'-[CGA][TCA][TA]ACAATGT[AT][TGA]C-3', probably as a monomer. Acts partially redundantly with the transcription factor dmd-3 to coordinate tail tip cell fusion and retraction and thereby regulate male tail tip morphogenesis. Promotes male-specific development of two tissues, the peripheral nervous system and the intestine. In the peripheral nervous system, directs differentiation of sensory ray neuroblasts into peripheral sense organs. In the intestine, causes repression of vitellogenin gene transcription. This Caenorhabditis elegans protein is Protein male abnormal 3.